The primary structure comprises 425 residues: Dihydroorotase (425 aa).

Residues histidine 61 and histidine 63 each coordinate Zn(2+). Substrate-binding positions include 63-65 and asparagine 95; that span reads HLR. Residues lysine 146, histidine 175, histidine 224, and aspartate 293 each coordinate Zn(2+). An N6-carboxylysine modification is found at lysine 146. Aspartate 293 is a catalytic residue. Residues histidine 297 and 311–312 each bind substrate; that span reads PG.

The protein belongs to the metallo-dependent hydrolases superfamily. DHOase family. Class I DHOase subfamily. The cofactor is Zn(2+).

It catalyses the reaction (S)-dihydroorotate + H2O = N-carbamoyl-L-aspartate + H(+). It functions in the pathway pyrimidine metabolism; UMP biosynthesis via de novo pathway; (S)-dihydroorotate from bicarbonate: step 3/3. In terms of biological role, catalyzes the reversible cyclization of carbamoyl aspartate to dihydroorotate. The polypeptide is Dihydroorotase (Aeropyrum pernix (strain ATCC 700893 / DSM 11879 / JCM 9820 / NBRC 100138 / K1)).